The chain runs to 380 residues: Cytochrome b (380 aa).

The next 4 membrane-spanning stretches (helical) occupy residues F34–T54, W78–I99, W114–L134, and F179–T199. Positions 84 and 98 each coordinate heme b. The heme b site is built by H183 and H197. H202 is a binding site for a ubiquinone. Transmembrane regions (helical) follow at residues L227–S247, L289–H309, I321–S341, and F348–P368.

Belongs to the cytochrome b family. The cytochrome bc1 complex contains 11 subunits: 3 respiratory subunits (MT-CYB, CYC1 and UQCRFS1), 2 core proteins (UQCRC1 and UQCRC2) and 6 low-molecular weight proteins (UQCRH/QCR6, UQCRB/QCR7, UQCRQ/QCR8, UQCR10/QCR9, UQCR11/QCR10 and a cleavage product of UQCRFS1). This cytochrome bc1 complex then forms a dimer. Requires heme b as cofactor.

Its subcellular location is the mitochondrion inner membrane. In terms of biological role, component of the ubiquinol-cytochrome c reductase complex (complex III or cytochrome b-c1 complex) that is part of the mitochondrial respiratory chain. The b-c1 complex mediates electron transfer from ubiquinol to cytochrome c. Contributes to the generation of a proton gradient across the mitochondrial membrane that is then used for ATP synthesis. This chain is Cytochrome b (MT-CYB), found in Buteo buteo (Eurasian buzzard).